Reading from the N-terminus, the 432-residue chain is Pachytene checkpoint protein 2 homolog (432 aa).

An ATP-binding site is contributed by 179 to 186 (GPPGTGKT).

The protein belongs to the AAA ATPase family. PCH2 subfamily.

Plays a key role in chromosome recombination and chromosome structure development during meiosis. Required at early steps in meiotic recombination that leads to non-crossovers pathways. Also needed for efficient completion of homologous synapsis by influencing crossover distribution along the chromosomes affecting both crossovers and non-crossovers pathways. The polypeptide is Pachytene checkpoint protein 2 homolog (TRIP13) (Gallus gallus (Chicken)).